The sequence spans 715 residues: Methylcrotonoyl-CoA carboxylase subunit alpha, mitochondrial (715 aa).

The transit peptide at 1 to 38 directs the protein to the mitochondrion; sequence MAAAALLAAVDRNQLRRVPILLLQPREWPWKHRTVKYG. The Biotin carboxylation domain occupies 45–490; sequence ITKVLIANRG…HTDFIPQHHK (446 aa). ATP is bound at residue Lys-159. The ATP-grasp domain maps to 163–360; sequence KSIMAAAGVP…LVEWQLRIAA (198 aa). Lys-193 carries the post-translational modification N6-acetyllysine. Residues Lys-201 and 207 to 208 contribute to the ATP site; that span reads GG. Position 233 is an N6-acetyllysine (Lys-233). ATP-binding residues include His-251, His-278, and Glu-318. The active site involves Arg-335. An N6-acetyllysine modification is found at Lys-490. At Lys-577 the chain carries N6-acetyllysine; alternate. Lys-577 carries the post-translational modification N6-succinyllysine; alternate. The Biotinyl-binding domain maps to 622 to 711; the sequence is SIEVGIPVPK…NRHAPLVEFE (90 aa). Lys-677 carries the post-translational modification N6-biotinyllysine.

As to quaternary structure, probably a dodecamer composed of six biotin-containing alpha subunits (MCCC1) and six beta (MCCC2) subunits. Interacts (via the biotin carboxylation domain) with SIRT4. Requires biotin as cofactor. Post-translationally, acetylated.

Its subcellular location is the mitochondrion matrix. The catalysed reaction is 3-methylbut-2-enoyl-CoA + hydrogencarbonate + ATP = 3-methyl-(2E)-glutaconyl-CoA + ADP + phosphate + H(+). Its pathway is amino-acid degradation; L-leucine degradation; (S)-3-hydroxy-3-methylglutaryl-CoA from 3-isovaleryl-CoA: step 2/3. Its function is as follows. Biotin-attachment subunit of the 3-methylcrotonyl-CoA carboxylase, an enzyme that catalyzes the conversion of 3-methylcrotonyl-CoA to 3-methylglutaconyl-CoA, a critical step for leucine and isovaleric acid catabolism. The sequence is that of Methylcrotonoyl-CoA carboxylase subunit alpha, mitochondrial from Rattus norvegicus (Rat).